Reading from the N-terminus, the 365-residue chain is 2-aminoethylphosphonate--pyruvate transaminase (365 aa).

Position 194 is an N6-(pyridoxal phosphate)lysine (Lys-194).

Belongs to the class-V pyridoxal-phosphate-dependent aminotransferase family. PhnW subfamily. In terms of assembly, homodimer. Pyridoxal 5'-phosphate is required as a cofactor.

The catalysed reaction is (2-aminoethyl)phosphonate + pyruvate = phosphonoacetaldehyde + L-alanine. In terms of biological role, involved in phosphonate degradation. This Bacillus thuringiensis subsp. konkukian (strain 97-27) protein is 2-aminoethylphosphonate--pyruvate transaminase.